A 147-amino-acid polypeptide reads, in one-letter code: MNNPDDVLLINRFLRQQHVLTLCAGSGMDMWCASCFYVFDENQMALFLMTEKHTRHSELMLINPQVAGTVATQSRTIALIKGIQYRGEISLLSGDAEQAARNRYCRRFPVAKVSSAPLWQLNLLEIKMTNNALGFGKKLHWSRVEPL.

Belongs to the UPF0306 family.

This Yersinia pestis bv. Antiqua (strain Angola) protein is UPF0306 protein YpAngola_A4021.